The chain runs to 641 residues: Toxin TseL (641 aa).

Interacts with VgrG3; this interaction allows TseL secretion to target cells.

The protein localises to the secreted. In terms of biological role, toxin secreted by the type VI (T6SS) secretion system that acts on prokaryotic as well as eukaryotic target cells. In Vibrio cholerae serotype O1 (strain ATCC 39315 / El Tor Inaba N16961), this protein is Toxin TseL.